The sequence spans 153 residues: CRIB domain-containing protein RIC4 (153 aa).

In terms of domain architecture, CRIB spans Ile99–Gly112.

Interacts with ARAC4/ROP2 and ARAC11/ROP1. As to expression, expressed in roots, leaves, stems, flowers, siliques and pollen.

Its subcellular location is the cell membrane. Its function is as follows. Functions as a downstream effector of Rho-related GTP binding proteins of the 'Rho of Plants' (ROPs) family. Participates in the propagation of ROP GTPase signals in specific cellular responses. Required for actin cortical microfilament assembly. Activated by ARAC4/ROP2 to promote the assembly of cortical actin microfilaments required for lobe formation and lateral expansion of pavement cells. Interaction with, and activation by ARAC4/ROP2 is inhibited by RIC1. Functions as a downstream effector of ARAC11/ROP1 to promote the assembly of apical F-actin associated with vesicle accumulation in the tip of the growing pollen tube. Counteracts the ARAC11/ROP1-RIC3 pathway, which activates calcium signaling that leads to apical F-actin disassembly associated with exocytosis, to control actin dynamics and pollen tube apical growth. Downstream of ARAC11/ROP1, is involved in the growth responses to the root-colonizing endophytic fungus P.indica. The chain is CRIB domain-containing protein RIC4 (RIC4) from Arabidopsis thaliana (Mouse-ear cress).